Consider the following 277-residue polypeptide: MVSELSLPEFEAGLSASLTCKRNFACFATFAGEIIGALRGSRLRVQLLEDFSTIGKDSVLSGELQVLVLATMQELPPREQNEVARWLRALRKVHPGLVCIATIGAHENGGPGMTNFLRRQFWFATRGPKRACGALRLPKRAAFTVHPAVHRYVLDVLVHIRMHRLLDHSQAGGASSSSAEDVLDLCRWLCSANHPEKTFVTPDDVQQACAWYFPMHLDVIRLPQQEASVLYGTSMKFAEDLLIGLRTFLKKTGTVDNPLLLETLIVQEVLGKVVPAI.

Belongs to the MTC2 family.

Its function is as follows. May be involved in telomere capping. This is Maintenance of telomere capping protein 2 (MTC2) from Eremothecium gossypii (strain ATCC 10895 / CBS 109.51 / FGSC 9923 / NRRL Y-1056) (Yeast).